The following is a 321-amino-acid chain: Glucokinase (321 aa).

Position 8–13 (8–13) interacts with ATP; it reads GDVGGT.

It belongs to the bacterial glucokinase family.

The protein resides in the cytoplasm. The catalysed reaction is D-glucose + ATP = D-glucose 6-phosphate + ADP + H(+). The protein is Glucokinase of Salmonella paratyphi B (strain ATCC BAA-1250 / SPB7).